A 135-amino-acid chain; its full sequence is uncharacterized protein (135 aa).

Residues 4–24 form a helical membrane-spanning segment; that stretch reads LGVFLILASIVCGVVAICGCT.

It is found in the membrane. This is an uncharacterized protein from Methanocaldococcus jannaschii (strain ATCC 43067 / DSM 2661 / JAL-1 / JCM 10045 / NBRC 100440) (Methanococcus jannaschii).